The sequence spans 78 residues: MNDNNSCKLTMLTRRLENMTQEYGQPDLPVPFLNGDEPGKLKLPLSERHEDVDYLTKEQCIQYFNGYSIHLIPPRISS.

It belongs to the UPF0612 family.

This Schizosaccharomyces pombe (strain 972 / ATCC 24843) (Fission yeast) protein is UPF0612 protein new22 (new22).